A 365-amino-acid polypeptide reads, in one-letter code: UPF0324 membrane protein Cj0999c (365 aa).

11 helical membrane passes run 12–34 (IVRSNFKGLLFTACIVIFAMYLS), 44–63 (HLAATAFAIIIGVLLSPWFF), 83–100 (LGIVLYGFNITLTELLSV), 105–127 (FLLSAIVIFFVFIIALFVGTKIF), 134–153 (SMLVGAGSAICGAAAVLALE), 163–185 (GILAVGTVVIFGLVFMFLYPIAF), 197–219 (AMGVFMGATLHEVANVAGAAEMA), 234–256 (VIIKMMRVILLVPFLLIVTYFFA), 269–288 (SITIPYFAFAFLGMIVLNTY), 303–325 (IISLGKTLCTLCIVFAMAALGLQ), and 338–360 (VFGLAFVLGLVLIFGGYFLTLAF).

This sequence belongs to the UPF0324 family.

It is found in the cell membrane. This is UPF0324 membrane protein Cj0999c from Campylobacter jejuni subsp. jejuni serotype O:2 (strain ATCC 700819 / NCTC 11168).